A 91-amino-acid polypeptide reads, in one-letter code: UPF0512 protein M (91 aa).

The protein belongs to the UPF0512 family.

This Dictyostelium discoideum (Social amoeba) protein is UPF0512 protein M.